The sequence spans 211 residues: Bacteriorhodopsin (211 aa).

The chain crosses the membrane as a helical span at residues 1 to 19 (IWLWLGTAGMFLGMLYFIA). At 20-33 (RGWGETDSRRQKFY) the chain is on the cytoplasmic side. Residues 34–52 (IATILITAIAFVNYLAMAL) traverse the membrane as a helical segment. Topologically, residues 53–68 (GFGLTIVEFAGEEHPI) are extracellular. A helical membrane pass occupies residues 69 to 86 (YWARYSDWLFTTPLLLYD). Over 87 to 97 (LGLLAGADRNT) the chain is Cytoplasmic. The chain crosses the membrane as a helical span at residues 98–117 (ITSLVSLDVLMIGTGLVATL). Residues 118–130 (SAGSGVLSAGAER) are Extracellular-facing. The helical transmembrane segment at 131 to 150 (LVWWGISTAFLLVLLYFLFS) threads the bilayer. Over 151–168 (SLSGRVADLPSDTRSTFK) the chain is Cytoplasmic. Residues 169-187 (TLRNLVTVVWLVYPVWWLI) traverse the membrane as a helical segment. Residues 188 to 199 (GTEGIGLVGIGI) are Extracellular-facing. The chain crosses the membrane as a helical span at residues 200-211 (ETAGFMVIDLTA).

Belongs to the archaeal/bacterial/fungal opsin family.

The protein localises to the cell membrane. In terms of biological role, light-driven proton pump. In Halobacterium halobium (strain port), this protein is Bacteriorhodopsin (bop).